The primary structure comprises 277 residues: MSWDDEDFAVPSGSKEKPVLNSWDDEFAENDDEPVLESWEDEETAKPKPKAAAAAAAKAPKKASPSPAATPAATKNTMLDIDTLDDKTRKELLRKAELESDLNNAADLFGGLGVAEEHPRARAEREREQLAAVAQPAALTKDTPIQSHPLFSDLETKKDYQELRKALATAITSTSNKSLLNYSGGLAIDLIRDISKPMTVENIRQTIATLNVLMKDKEREERQARLAKVKGGTATGGAGKKKAKATRANLGGAFKKDNDFDLGGNDNFDDFGEDDFM.

Residues 1–80 (MSWDDEDFAV…PAATKNTMLD (80 aa)) are disordered. Positions 23 to 43 (WDDEFAENDDEPVLESWEDEE) are enriched in acidic residues. Residues 50 to 75 (KAAAAAAAKAPKKASPSPAATPAATK) show a composition bias toward low complexity. The stretch at 199 to 230 (TVENIRQTIATLNVLMKDKEREERQARLAKVK) forms a coiled coil. A disordered region spans residues 257 to 277 (DNDFDLGGNDNFDDFGEDDFM). Residues 267 to 277 (NFDDFGEDDFM) show a composition bias toward acidic residues.

The protein belongs to the eIF-3 subunit J family. As to quaternary structure, component of the eukaryotic translation initiation factor 3 (eIF-3) complex.

It is found in the cytoplasm. In terms of biological role, component of the eukaryotic translation initiation factor 3 (eIF-3) complex, which is involved in protein synthesis of a specialized repertoire of mRNAs and, together with other initiation factors, stimulates binding of mRNA and methionyl-tRNAi to the 40S ribosome. The eIF-3 complex specifically targets and initiates translation of a subset of mRNAs involved in cell proliferation. The polypeptide is Eukaryotic translation initiation factor 3 subunit J (Kluyveromyces lactis (strain ATCC 8585 / CBS 2359 / DSM 70799 / NBRC 1267 / NRRL Y-1140 / WM37) (Yeast)).